The sequence spans 350 residues: Methylthioribose-1-phosphate isomerase (350 aa).

The active-site Proton donor is the Asp241.

It belongs to the eIF-2B alpha/beta/delta subunits family. MtnA subfamily.

Its subcellular location is the cytoplasm. It localises to the nucleus. It carries out the reaction 5-(methylsulfanyl)-alpha-D-ribose 1-phosphate = 5-(methylsulfanyl)-D-ribulose 1-phosphate. Its pathway is amino-acid biosynthesis; L-methionine biosynthesis via salvage pathway; L-methionine from S-methyl-5-thio-alpha-D-ribose 1-phosphate: step 1/6. Functionally, catalyzes the interconversion of methylthioribose-1-phosphate (MTR-1-P) into methylthioribulose-1-phosphate (MTRu-1-P). The polypeptide is Methylthioribose-1-phosphate isomerase (Nematostella vectensis (Starlet sea anemone)).